The chain runs to 597 residues: Elongation factor 4 (597 aa).

The tr-type G domain maps to 2 to 184 (DHIRNFSIIA…ALIAKVPPPK (183 aa)). GTP contacts are provided by residues 14-19 (DHGKST) and 131-134 (NKID).

The protein belongs to the TRAFAC class translation factor GTPase superfamily. Classic translation factor GTPase family. LepA subfamily.

The protein resides in the cell inner membrane. The enzyme catalyses GTP + H2O = GDP + phosphate + H(+). Its function is as follows. Required for accurate and efficient protein synthesis under certain stress conditions. May act as a fidelity factor of the translation reaction, by catalyzing a one-codon backward translocation of tRNAs on improperly translocated ribosomes. Back-translocation proceeds from a post-translocation (POST) complex to a pre-translocation (PRE) complex, thus giving elongation factor G a second chance to translocate the tRNAs correctly. Binds to ribosomes in a GTP-dependent manner. The chain is Elongation factor 4 from Cupriavidus pinatubonensis (strain JMP 134 / LMG 1197) (Cupriavidus necator (strain JMP 134)).